The following is a 95-amino-acid chain: Small ribosomal subunit protein bS18 (95 aa).

The protein belongs to the bacterial ribosomal protein bS18 family. As to quaternary structure, part of the 30S ribosomal subunit. Forms a tight heterodimer with protein bS6.

In terms of biological role, binds as a heterodimer with protein bS6 to the central domain of the 16S rRNA, where it helps stabilize the platform of the 30S subunit. This chain is Small ribosomal subunit protein bS18, found in Rickettsia africae (strain ESF-5).